The chain runs to 458 residues: Bifunctional protein GlmU (458 aa).

Residues 1-229 form a pyrophosphorylase region; the sequence is MKEKALSIVI…FMEVEGVNNR (229 aa). Residues 11-14, K25, Q76, 81-82, 103-105, G140, E154, N169, and N227 contribute to the UDP-N-acetyl-alpha-D-glucosamine site; these read LAAG, GT, and YGD. Residue D105 participates in Mg(2+) binding. N227 is a binding site for Mg(2+). Residues 230–250 form a linker region; the sequence is QQLARLERYYQRKQADNLLLA. Residues 251–458 form an N-acetyltransferase region; it reads GVALADPERF…WQRPTKQTKK (208 aa). UDP-N-acetyl-alpha-D-glucosamine-binding residues include R333 and K351. The active-site Proton acceptor is H363. The UDP-N-acetyl-alpha-D-glucosamine site is built by Y366 and N377. Residues A380, 386–387, S405, A423, and R440 contribute to the acetyl-CoA site; that span reads NY.

This sequence in the N-terminal section; belongs to the N-acetylglucosamine-1-phosphate uridyltransferase family. In the C-terminal section; belongs to the transferase hexapeptide repeat family. Homotrimer. It depends on Mg(2+) as a cofactor.

It is found in the cytoplasm. It carries out the reaction alpha-D-glucosamine 1-phosphate + acetyl-CoA = N-acetyl-alpha-D-glucosamine 1-phosphate + CoA + H(+). The catalysed reaction is N-acetyl-alpha-D-glucosamine 1-phosphate + UTP + H(+) = UDP-N-acetyl-alpha-D-glucosamine + diphosphate. The protein operates within nucleotide-sugar biosynthesis; UDP-N-acetyl-alpha-D-glucosamine biosynthesis; N-acetyl-alpha-D-glucosamine 1-phosphate from alpha-D-glucosamine 6-phosphate (route II): step 2/2. Its pathway is nucleotide-sugar biosynthesis; UDP-N-acetyl-alpha-D-glucosamine biosynthesis; UDP-N-acetyl-alpha-D-glucosamine from N-acetyl-alpha-D-glucosamine 1-phosphate: step 1/1. It functions in the pathway bacterial outer membrane biogenesis; LPS lipid A biosynthesis. In terms of biological role, catalyzes the last two sequential reactions in the de novo biosynthetic pathway for UDP-N-acetylglucosamine (UDP-GlcNAc). The C-terminal domain catalyzes the transfer of acetyl group from acetyl coenzyme A to glucosamine-1-phosphate (GlcN-1-P) to produce N-acetylglucosamine-1-phosphate (GlcNAc-1-P), which is converted into UDP-GlcNAc by the transfer of uridine 5-monophosphate (from uridine 5-triphosphate), a reaction catalyzed by the N-terminal domain. The protein is Bifunctional protein GlmU of Pasteurella multocida (strain Pm70).